The sequence spans 105 residues: Nucleoid-associated protein Ccur92_18190 (105 aa).

Belongs to the YbaB/EbfC family. Homodimer.

It localises to the cytoplasm. It is found in the nucleoid. Binds to DNA and alters its conformation. May be involved in regulation of gene expression, nucleoid organization and DNA protection. In Campylobacter curvus (strain 525.92), this protein is Nucleoid-associated protein Ccur92_18190.